The following is a 243-amino-acid chain: 3-deoxy-manno-octulosonate cytidylyltransferase (243 aa).

This sequence belongs to the KdsB family.

It is found in the cytoplasm. The catalysed reaction is 3-deoxy-alpha-D-manno-oct-2-ulosonate + CTP = CMP-3-deoxy-beta-D-manno-octulosonate + diphosphate. It participates in nucleotide-sugar biosynthesis; CMP-3-deoxy-D-manno-octulosonate biosynthesis; CMP-3-deoxy-D-manno-octulosonate from 3-deoxy-D-manno-octulosonate and CTP: step 1/1. It functions in the pathway bacterial outer membrane biogenesis; lipopolysaccharide biosynthesis. In terms of biological role, activates KDO (a required 8-carbon sugar) for incorporation into bacterial lipopolysaccharide in Gram-negative bacteria. The sequence is that of 3-deoxy-manno-octulosonate cytidylyltransferase from Helicobacter pylori (strain G27).